The sequence spans 32 residues: Lectin (32 aa).

Belongs to the leguminous lectin family. Homotetramer.

In terms of biological role, metalloglycoprotein, containing Ca, Mg, Mn, and Zn and the carbohydrates galactose, glucosamine, mannose, and fucose. It agglutinates erythrocytes of blood group A1. In Macrotyloma axillare (Perennial horse gram), this protein is Lectin.